The chain runs to 238 residues: Probable 2-phosphosulfolactate phosphatase (238 aa).

The protein belongs to the ComB family. Mg(2+) is required as a cofactor.

It catalyses the reaction (2R)-O-phospho-3-sulfolactate + H2O = (2R)-3-sulfolactate + phosphate. This chain is Probable 2-phosphosulfolactate phosphatase, found in Clostridium botulinum (strain Alaska E43 / Type E3).